The chain runs to 391 residues: Ferrochelatase (391 aa).

Fe cation contacts are provided by His196 and Glu281.

It belongs to the ferrochelatase family.

The protein resides in the cytoplasm. It carries out the reaction heme b + 2 H(+) = protoporphyrin IX + Fe(2+). It participates in porphyrin-containing compound metabolism; protoheme biosynthesis; protoheme from protoporphyrin-IX: step 1/1. Catalyzes the ferrous insertion into protoporphyrin IX. This is Ferrochelatase from Prochlorococcus marinus (strain MIT 9215).